A 60-amino-acid chain; its full sequence is DNA-directed RNA polymerase subunit Rpo6 (60 aa).

This sequence belongs to the archaeal Rpo6/eukaryotic RPB6 RNA polymerase subunit family. Part of the RNA polymerase complex.

The protein localises to the cytoplasm. The catalysed reaction is RNA(n) + a ribonucleoside 5'-triphosphate = RNA(n+1) + diphosphate. DNA-dependent RNA polymerase (RNAP) catalyzes the transcription of DNA into RNA using the four ribonucleoside triphosphates as substrates. In Methanothrix thermoacetophila (strain DSM 6194 / JCM 14653 / NBRC 101360 / PT) (Methanosaeta thermophila), this protein is DNA-directed RNA polymerase subunit Rpo6.